We begin with the raw amino-acid sequence, 132 residues long: Global transcriptional regulator Spx (132 aa).

Cysteine 10 and cysteine 13 form a disulfide bridge.

It belongs to the ArsC family. Spx subfamily. In terms of assembly, interacts with the C-terminal domain of the alpha subunit of the RNAP.

It localises to the cytoplasm. Global transcriptional regulator that plays a key role in stress response and exerts either positive or negative regulation of genes. Acts by interacting with the C-terminal domain of the alpha subunit of the RNA polymerase (RNAP). This interaction can enhance binding of RNAP to the promoter region of target genes and stimulate their transcription, or block interaction of RNAP with activator. The polypeptide is Global transcriptional regulator Spx (Enterococcus faecalis (strain ATCC 700802 / V583)).